The chain runs to 294 residues: MHPRFQTAFAQLADNLQSALAPILADHHFPAMLTAEQVSTLKNTAGLDEDALAFALLPLAAACARTDLSHFNVGAIARGVSGNWYFGANMEFLGTTMQQTVHAEQSAISHAWLRGEKGLAAVTVNYTPCGHCRQFMNELNSGLDLRIHLPGRAPHTLRDYLPDAFGPKDLEIKTLLMDEQDHGFTLTGDTLTQAAITAANKSHMPYSHSPSGVALECKDGRIFTGSYAENAAFNPTLPPLQGALNLLSLNGYDYADIQRAILAEKGDAALIQWDATAATLKALGCHNIDRVLLG.

2 consecutive CMP/dCMP-type deaminase domains span residues 48–168 (DEDA…FGPK) and 186–294 (LTGD…VLLG). 89–91 (NME) contributes to the substrate binding site. His102 contacts Zn(2+). The active-site Proton donor is Glu104. Positions 129 and 132 each coordinate Zn(2+).

This sequence belongs to the cytidine and deoxycytidylate deaminase family. As to quaternary structure, homodimer. The cofactor is Zn(2+).

The enzyme catalyses cytidine + H2O + H(+) = uridine + NH4(+). It catalyses the reaction 2'-deoxycytidine + H2O + H(+) = 2'-deoxyuridine + NH4(+). In terms of biological role, this enzyme scavenges exogenous and endogenous cytidine and 2'-deoxycytidine for UMP synthesis. This chain is Cytidine deaminase, found in Salmonella schwarzengrund (strain CVM19633).